Consider the following 394-residue polypeptide: Protein-glutamate methylesterase/protein-glutamine glutaminase of group 2 operon (394 aa).

In terms of domain architecture, Response regulatory spans Arg-21–Arg-139. Asp-72 carries the 4-aspartylphosphate modification. The disordered stretch occupies residues Leu-148 to Asp-201. Low complexity predominate over residues Thr-162–Ala-172. A CheB-type methylesterase domain is found at Pro-200 to Gly-382. Catalysis depends on residues Ser-212, His-238, and Asp-334.

This sequence belongs to the CheB family. In terms of processing, phosphorylated by CheA. Phosphorylation of the N-terminal regulatory domain activates the methylesterase activity.

The protein localises to the cytoplasm. The catalysed reaction is [protein]-L-glutamate 5-O-methyl ester + H2O = L-glutamyl-[protein] + methanol + H(+). It carries out the reaction L-glutaminyl-[protein] + H2O = L-glutamyl-[protein] + NH4(+). In terms of biological role, involved in chemotaxis. Part of a chemotaxis signal transduction system that modulates chemotaxis in response to various stimuli. Catalyzes the demethylation of specific methylglutamate residues introduced into the chemoreceptors (methyl-accepting chemotaxis proteins or MCP) by CheR. Also mediates the irreversible deamidation of specific glutamine residues to glutamic acid. The sequence is that of Protein-glutamate methylesterase/protein-glutamine glutaminase of group 2 operon from Rhodospirillum centenum (strain ATCC 51521 / SW).